Here is a 362-residue protein sequence, read N- to C-terminus: Porin Omp2b (362 aa).

The N-terminal stretch at 1-22 (MNIKSLLLGSAAALVAASGAQA) is a signal peptide.

The protein belongs to the alphaproteobacteria porin family. Homotrimer.

It is found in the cell outer membrane. Its function is as follows. Forms passive diffusion pores that allow small molecular weight hydrophilic materials across the outer membrane. The protein is Porin Omp2b (omp2b) of Brucella abortus (strain S19).